The primary structure comprises 131 residues: MGSLRTRQLFHAALLWLCLPLPLLLCENLHCYYSPVLEKEITFELVVTECPPNEMCFKGLGRYGNYTALSARGCMLEKDCSQVHSLRLLGTVYTMSYSCCDWPYCNRAVALEPLTAMLVAAAVVACSFCLT.

The signal sequence occupies residues methionine 1–cysteine 26. 4 cysteine pairs are disulfide-bonded: cysteine 31/cysteine 56, cysteine 50/cysteine 74, cysteine 80/cysteine 99, and cysteine 100/cysteine 105. A UPAR/Ly6 domain is found at cysteine 31 to asparagine 106. Asparagine 65 is a glycosylation site (N-linked (GlcNAc...) asparagine). A lipid anchor (GPI-anchor amidated asparagine) is attached at asparagine 106. Positions arginine 107–threonine 131 are cleaved as a propeptide — removed in mature form.

The protein belongs to the SPACA4/bouncer family. In terms of assembly, interacts with spermatocyte complex composed of izumo1, spaca6 and tmem81. Expressed in oocytes. Not expressed in testis.

Its subcellular location is the cell membrane. Its function is as follows. Oocyte-expressed fertilization factor that mediates sperm-egg binding and is essential for sperm entry into the egg. Necessary and sufficient to mediate species-specific gamete recognition and fertilization, which is essential for vertebrate species performing external fertilization. External fertilization cannot guarantee that only conspecific sperm reaches the egg by precopulatory mate choice: proteins such as Bouncer can therefore support the selection of conspecific sperm. The protein is Protein Bouncer of Oryzias latipes (Japanese rice fish).